The sequence spans 338 residues: RNA 3'-terminal phosphate cyclase (338 aa).

ATP contacts are provided by residues glutamine 103 and tyrosine 283–glutamine 287. Residue histidine 308 is the Tele-AMP-histidine intermediate of the active site.

It belongs to the RNA 3'-terminal cyclase family. Type 1 subfamily.

Its subcellular location is the cytoplasm. It carries out the reaction a 3'-end 3'-phospho-ribonucleotide-RNA + ATP = a 3'-end 2',3'-cyclophospho-ribonucleotide-RNA + AMP + diphosphate. Functionally, catalyzes the conversion of 3'-phosphate to a 2',3'-cyclic phosphodiester at the end of RNA. The mechanism of action of the enzyme occurs in 3 steps: (A) adenylation of the enzyme by ATP; (B) transfer of adenylate to an RNA-N3'P to produce RNA-N3'PP5'A; (C) and attack of the adjacent 2'-hydroxyl on the 3'-phosphorus in the diester linkage to produce the cyclic end product. The biological role of this enzyme is unknown but it is likely to function in some aspects of cellular RNA processing. The protein is RNA 3'-terminal phosphate cyclase of Shigella boydii serotype 4 (strain Sb227).